Reading from the N-terminus, the 156-residue chain is Methylated-DNA--protein-cysteine methyltransferase (156 aa).

Residue C120 is the Nucleophile; methyl group acceptor of the active site.

The protein belongs to the MGMT family.

It is found in the cytoplasm. It carries out the reaction a 6-O-methyl-2'-deoxyguanosine in DNA + L-cysteinyl-[protein] = S-methyl-L-cysteinyl-[protein] + a 2'-deoxyguanosine in DNA. The catalysed reaction is a 4-O-methyl-thymidine in DNA + L-cysteinyl-[protein] = a thymidine in DNA + S-methyl-L-cysteinyl-[protein]. In terms of biological role, involved in the cellular defense against the biological effects of O6-methylguanine (O6-MeG) and O4-methylthymine (O4-MeT) in DNA. Repairs the methylated nucleobase in DNA by stoichiometrically transferring the methyl group to a cysteine residue in the enzyme. This is a suicide reaction: the enzyme is irreversibly inactivated. The protein is Methylated-DNA--protein-cysteine methyltransferase of Metallosphaera sedula (strain ATCC 51363 / DSM 5348 / JCM 9185 / NBRC 15509 / TH2).